Reading from the N-terminus, the 265-residue chain is MSEQQMDLKDLMPTKRKYMWKTAEDRRMSDLTCVLEWLERRQGKKKQAPEKQKPKVVTVLKRNKKKEEKKGKGLMTARGGNRRDTETSQQALGKRFRKDAASYRSLYGVEQKGKHLSMVPGSYIKDGPKKSDTDIKDAVDPESTQRPNPFRRQSIVLDPMLQEGTFNSQRATFIRDWSNKMPDMAYERKLKSLMEKSTEPKMETMRMLKPEEVLSCRYLRLSKENIRTLLKLCKDAGMNVDIHPHMVEEDIDAKKVFTGIPSMAL.

Disordered regions lie at residues 62-94 and 118-149; these read RNKKKEEKKGKGLMTARGGNRRDTETSQQALGK and MVPGSYIKDGPKKSDTDIKDAVDPESTQRPNP. A compositionally biased stretch (basic and acidic residues) spans 126 to 139; sequence DGPKKSDTDIKDAV.

This is an uncharacterized protein from Homo sapiens (Human).